A 237-amino-acid polypeptide reads, in one-letter code: Small ribosomal subunit protein uS2m (237 aa).

The protein belongs to the universal ribosomal protein uS2 family.

Its subcellular location is the mitochondrion. This is Small ribosomal subunit protein uS2m (RPS2) from Marchantia polymorpha (Common liverwort).